A 496-amino-acid chain; its full sequence is MGRRALLLLLLSFLAPWATIALRPALRALGSLHLPTNPTSLPAVAKNYSVLYFQQKVDHFGFNTVKTFNQRYLVADKYWKKNGGSILFYTGNEGDIIWFCNNTGFMWDVAEELKAMLVFAEHRYYGESLPFGDNSFKDSRHLNFLTSEQALADFAELIKHLKRTIPGAENQPVIAIGGSYGGMLAAWFRMKYPHMVVGALAASAPIWQFEDLVPCGVFMKIVTTDFRKSGPHCSESIHRSWDAINRLSNTGSGLQWLTGALHLCSPLTSQDIQHLKDWISETWVNLAMVDYPYASNFLQPLPAWPIKVVCQYLKNPNVSDSLLLQNIFQALNVYYNYSGQVKCLNISETATSSLGTLGWSYQACTEVVMPFCTNGVDDMFEPHSWNLKELSDDCFQQWGVRPRPSWITTMYGGKNISSHTNIVFSNGELDPWSGGGVTKDITDTLVAVTISEGAHHLDLRTKNALDPMSVLLARSLEVRHMKNWIRDFYDSAGKQH.

A signal peptide spans 1-21; the sequence is MGRRALLLLLLSFLAPWATIA. A propeptide spanning residues 22–45 is cleaved from the precursor; the sequence is LRPALRALGSLHLPTNPTSLPAVA. Residues asparagine 47 and asparagine 101 are each glycosylated (N-linked (GlcNAc...) asparagine). Serine 179 functions as the Charge relay system in the catalytic mechanism. An SKS domain region spans residues 194 to 334; the sequence is HMVVGALAAS…QNIFQALNVY (141 aa). 4 disulfide bridges follow: cysteine 215–cysteine 372, cysteine 233–cysteine 310, cysteine 264–cysteine 343, and cysteine 364–cysteine 394. N-linked (GlcNAc...) asparagine glycans are attached at residues asparagine 317, asparagine 336, and asparagine 345. N-linked (GlcNAc...) asparagine glycosylation occurs at asparagine 415. Residues aspartate 430 and histidine 455 each act as charge relay system in the active site.

Belongs to the peptidase S28 family. As to quaternary structure, homodimer. In terms of tissue distribution, highest levels in placenta, lung and liver. Also present in heart, brain, pancreas and kidney.

It localises to the lysosome. It catalyses the reaction Cleavage of a -Pro-|-Xaa bond to release a C-terminal amino acid.. In terms of biological role, cleaves C-terminal amino acids linked to proline in peptides such as angiotensin II, III and des-Arg9-bradykinin. This cleavage occurs at acidic pH, but enzymatic activity is retained with some substrates at neutral pH. This chain is Lysosomal Pro-X carboxypeptidase (PRCP), found in Homo sapiens (Human).